A 77-amino-acid polypeptide reads, in one-letter code: Acyl carrier protein (77 aa).

In terms of domain architecture, Carrier spans 2–77 (SDIADRVKKI…DAVKFISEAA (76 aa)). O-(pantetheine 4'-phosphoryl)serine is present on serine 37.

Belongs to the acyl carrier protein (ACP) family. 4'-phosphopantetheine is transferred from CoA to a specific serine of apo-ACP by AcpS. This modification is essential for activity because fatty acids are bound in thioester linkage to the sulfhydryl of the prosthetic group.

It localises to the cytoplasm. Its pathway is lipid metabolism; fatty acid biosynthesis. Carrier of the growing fatty acid chain in fatty acid biosynthesis. The sequence is that of Acyl carrier protein from Cereibacter sphaeroides (strain ATCC 17029 / ATH 2.4.9) (Rhodobacter sphaeroides).